We begin with the raw amino-acid sequence, 194 residues long: ATP-dependent Clp protease proteolytic subunit 1 (194 aa).

The active-site Nucleophile is Ser98. His123 is a catalytic residue.

It belongs to the peptidase S14 family. As to quaternary structure, fourteen ClpP subunits assemble into 2 heptameric rings which stack back to back to give a disk-like structure with a central cavity, resembling the structure of eukaryotic proteasomes.

The protein localises to the cytoplasm. It catalyses the reaction Hydrolysis of proteins to small peptides in the presence of ATP and magnesium. alpha-casein is the usual test substrate. In the absence of ATP, only oligopeptides shorter than five residues are hydrolyzed (such as succinyl-Leu-Tyr-|-NHMec, and Leu-Tyr-Leu-|-Tyr-Trp, in which cleavage of the -Tyr-|-Leu- and -Tyr-|-Trp bonds also occurs).. Its function is as follows. Cleaves peptides in various proteins in a process that requires ATP hydrolysis. Has a chymotrypsin-like activity. Plays a major role in the degradation of misfolded proteins. ClpXP1 is involved in the complete degradation of the Site-2 clipped anti-sigma-W factor RsiW. This results in the release of SigW and the transcription activation of the genes under the control of the sigma-W factor. The sequence is that of ATP-dependent Clp protease proteolytic subunit 1 from Halalkalibacterium halodurans (strain ATCC BAA-125 / DSM 18197 / FERM 7344 / JCM 9153 / C-125) (Bacillus halodurans).